Consider the following 129-residue polypeptide: Protein Turandot A (129 aa).

The N-terminal stretch at 1-21 (MNSLTGFMCCALLLISPLCMG) is a signal peptide. N-linked (GlcNAc...) asparagine glycosylation is present at asparagine 49.

This sequence belongs to the Turandot family.

Its subcellular location is the secreted. Its function is as follows. A humoral factor that plays a role in stress tolerance; gives increased resistance to the lethal effects of bacterial challenge and stress. Regulated by the JAK/STAT pathway and NF-KB-like Relish pathway in the fat body, upd3 in the hemocytes and Mekk1 in response to septic injury and consequent immune response. This Drosophila yakuba (Fruit fly) protein is Protein Turandot A (TotA).